A 432-amino-acid polypeptide reads, in one-letter code: D-amino acid dehydrogenase (432 aa).

FAD is bound at residue 3–17 (VVILGSGVVGVTSAW).

It belongs to the DadA oxidoreductase family. FAD serves as cofactor.

The enzyme catalyses a D-alpha-amino acid + A + H2O = a 2-oxocarboxylate + AH2 + NH4(+). Its pathway is amino-acid degradation; D-alanine degradation; NH(3) and pyruvate from D-alanine: step 1/1. Its function is as follows. Oxidative deamination of D-amino acids. The protein is D-amino acid dehydrogenase of Salmonella paratyphi C (strain RKS4594).